A 542-amino-acid chain; its full sequence is Glucans biosynthesis protein D (542 aa).

A signal peptide (tat-type signal) is located at residues 1–31; that stretch reads MHRRNLLKASMAIAAYTGLSATGLLASRAWA.

Belongs to the OpgD/OpgG family. Post-translationally, predicted to be exported by the Tat system. The position of the signal peptide cleavage has not been experimentally proven.

The protein resides in the periplasm. Its pathway is glycan metabolism; osmoregulated periplasmic glucan (OPG) biosynthesis. Probably involved in the control of the structural glucose backbone of osmoregulated periplasmic glucans (OPGs). This Pseudomonas fluorescens (strain Pf0-1) protein is Glucans biosynthesis protein D.